A 142-amino-acid polypeptide reads, in one-letter code: uncharacterized protein (142 aa).

Positions 1 to 26 are cleaved as a signal peptide; the sequence is MITEFIKSFLLFFFLPFFLSMPMIFA.

This is an uncharacterized protein from Schizosaccharomyces pombe (strain 972 / ATCC 24843) (Fission yeast).